A 638-amino-acid polypeptide reads, in one-letter code: Chaperone protein DnaK (638 aa).

Threonine 197 is modified (phosphothreonine; by autocatalysis). The segment at 598 to 638 (QQSAPSGAAAGPDEGAPSGSGGTSGTRGGDDVIDAEFTETK) is disordered. Residues 615-624 (SGSGGTSGTR) are compositionally biased toward gly residues. A compositionally biased stretch (acidic residues) spans 628–638 (DVIDAEFTETK).

Belongs to the heat shock protein 70 family.

In terms of biological role, acts as a chaperone. This Gloeobacter violaceus (strain ATCC 29082 / PCC 7421) protein is Chaperone protein DnaK.